A 425-amino-acid polypeptide reads, in one-letter code: Multifunctional CCA protein (425 aa).

Residues G8 and R11 each coordinate ATP. Residues G8 and R11 each contribute to the CTP site. Mg(2+) is bound by residues E21 and D23. Residues R91, R137, and R140 each coordinate ATP. Positions 91, 137, and 140 each coordinate CTP. One can recognise an HD domain in the interval 228-329 (TGVHTLMVLD…VDLLDRLGAL (102 aa)).

The protein belongs to the tRNA nucleotidyltransferase/poly(A) polymerase family. Bacterial CCA-adding enzyme type 1 subfamily. Monomer. Can also form homodimers and oligomers. Mg(2+) is required as a cofactor. Requires Ni(2+) as cofactor.

The catalysed reaction is a tRNA precursor + 2 CTP + ATP = a tRNA with a 3' CCA end + 3 diphosphate. The enzyme catalyses a tRNA with a 3' CCA end + 2 CTP + ATP = a tRNA with a 3' CCACCA end + 3 diphosphate. Its function is as follows. Catalyzes the addition and repair of the essential 3'-terminal CCA sequence in tRNAs without using a nucleic acid template. Adds these three nucleotides in the order of C, C, and A to the tRNA nucleotide-73, using CTP and ATP as substrates and producing inorganic pyrophosphate. tRNA 3'-terminal CCA addition is required both for tRNA processing and repair. Also involved in tRNA surveillance by mediating tandem CCA addition to generate a CCACCA at the 3' terminus of unstable tRNAs. While stable tRNAs receive only 3'-terminal CCA, unstable tRNAs are marked with CCACCA and rapidly degraded. The protein is Multifunctional CCA protein of Methylococcus capsulatus (strain ATCC 33009 / NCIMB 11132 / Bath).